The chain runs to 74 residues: Kappa-stichotoxin-Sgt4a (74 aa).

A signal peptide spans 1–22 (MKFQVIAAVLLIEFCLCVVVTA). Residues 23 to 39 (RMELQDVEDVENGFQKR) constitute a propeptide that is removed on maturation. The ShKT domain occupies 42-74 (CIDTIPQSRCTAFQCKHSMKYRLSFCRKTCGTC). Disulfide bonds link Cys-42–Cys-74, Cys-51–Cys-67, and Cys-56–Cys-71.

This sequence belongs to the sea anemone type 1 potassium channel toxin family. Type 1a subfamily.

Its subcellular location is the secreted. The protein localises to the nematocyst. Inhibits voltage-gated potassium channels (Kv) with higher potency for Kv1.1/KCNA1 and Kv1.3/KCNA3. In Stichodactyla gigantea (Giant carpet anemone), this protein is Kappa-stichotoxin-Sgt4a.